The following is a 500-amino-acid chain: NAD(P)H-quinone oxidoreductase chain 4, chloroplastic (500 aa).

The next 15 helical transmembrane spans lie at 3 to 23 (FFPW…IILF), 37 to 57 (ICIC…HFQL), 87 to 107 (IGPI…AWPV), 113 to 130 (LFHF…GLFA), 134 to 154 (LLLF…LLSM), 167 to 187 (FILY…GVGL), 208 to 228 (ALEI…SPII), 242 to 262 (HYST…YGLI), 272 to 292 (AHSI…IYAA), 305 to 325 (IAYS…SIND), 330 to 350 (GAIL…FLAG), 364 to 384 (MGGI…FSMA), 386 to 406 (LALP…GIIT), 411 to 431 (LLIS…LTPI), and 462 to 482 (LFVS…PDFV).

It belongs to the complex I subunit 4 family.

Its subcellular location is the plastid. The protein localises to the chloroplast thylakoid membrane. It carries out the reaction a plastoquinone + NADH + (n+1) H(+)(in) = a plastoquinol + NAD(+) + n H(+)(out). The enzyme catalyses a plastoquinone + NADPH + (n+1) H(+)(in) = a plastoquinol + NADP(+) + n H(+)(out). This Daucus carota (Wild carrot) protein is NAD(P)H-quinone oxidoreductase chain 4, chloroplastic.